The primary structure comprises 590 residues: Beta-glucosidase 29 (590 aa).

An N-terminal signal peptide occupies residues 1-21 (MNVQIFILLLIISWLTPKITS). A beta-D-glucoside-binding positions include Gln48, His151, and 196-197 (NE). The active-site Proton donor is the Glu197. Cys216 and Cys224 are disulfide-bonded. 2 N-linked (GlcNAc...) asparagine glycosylation sites follow: Asn255 and Asn331. Residue Tyr341 coordinates a beta-D-glucoside. Asn371 is a glycosylation site (N-linked (GlcNAc...) asparagine). A beta-D-glucoside contacts are provided by residues Glu413, Trp463, 470–471 (EW), and Phe479. Glu413 acts as the Nucleophile in catalysis. 2 N-linked (GlcNAc...) asparagine glycosylation sites follow: Asn522 and Asn553.

Belongs to the glycosyl hydrolase 1 family.

It catalyses the reaction Hydrolysis of terminal, non-reducing beta-D-glucosyl residues with release of beta-D-glucose.. This is Beta-glucosidase 29 from Arabidopsis thaliana (Mouse-ear cress).